A 612-amino-acid chain; its full sequence is Peroxisomal carnitine O-octanoyltransferase (612 aa).

An N-acetylmethionine modification is found at Met1. Lys40 and Lys57 each carry N6-succinyllysine. His327 serves as the catalytic Proton acceptor. Residues Lys406 and 410-417 contribute to the CoA site; that span reads KEKQLHPD. Lys406 carries the N6-acetyllysine; alternate modification. Lys406 carries the post-translational modification N6-succinyllysine; alternate. (R)-carnitine is bound by residues Tyr439, Thr441, and Thr452. The Microbody targeting signal signature appears at 610–612; sequence PHL.

This sequence belongs to the carnitine/choline acetyltransferase family. In terms of assembly, monomer.

The protein localises to the peroxisome. It carries out the reaction octanoyl-CoA + (R)-carnitine = O-octanoyl-(R)-carnitine + CoA. It catalyses the reaction 4,8-dimethylnonanoyl-CoA + (R)-carnitine = O-4,8-dimethylnonanoyl-(R)-carnitine + CoA. It functions in the pathway lipid metabolism; fatty acid beta-oxidation. In terms of biological role, beta-oxidation of fatty acids. The highest activity concerns the C6 to C10 chain length substrate. The protein is Peroxisomal carnitine O-octanoyltransferase (CROT) of Bos taurus (Bovine).